Here is a 173-residue protein sequence, read N- to C-terminus: Peptide deformylase (173 aa).

Positions 91 and 133 each coordinate Fe cation. The active site involves Glu134. His137 provides a ligand contact to Fe cation.

Belongs to the polypeptide deformylase family. Fe(2+) is required as a cofactor.

It catalyses the reaction N-terminal N-formyl-L-methionyl-[peptide] + H2O = N-terminal L-methionyl-[peptide] + formate. In terms of biological role, removes the formyl group from the N-terminal Met of newly synthesized proteins. Requires at least a dipeptide for an efficient rate of reaction. N-terminal L-methionine is a prerequisite for activity but the enzyme has broad specificity at other positions. The polypeptide is Peptide deformylase (Buchnera aphidicola subsp. Acyrthosiphon pisum (strain 5A)).